Reading from the N-terminus, the 444-residue chain is Tubulin beta-8 chain (444 aa).

The MREI motif signature appears at 1–4 (MREI). 6 residues coordinate GTP: Gln-11, Glu-69, Ser-138, Gly-142, Thr-143, and Gly-144. Glu-69 provides a ligand contact to Mg(2+). Position 172 is a phosphoserine; by CDK1 (Ser-172). GTP contacts are provided by Asn-204 and Asn-226. Residues 423–444 (QQYQDATAEEEEDEEYAEEEVA) are disordered. The span at 429 to 444 (TAEEEEDEEYAEEEVA) shows a compositional bias: acidic residues. At Glu-436 the chain carries 5-glutamyl polyglutamate.

It belongs to the tubulin family. As to quaternary structure, dimer of alpha and beta chains. A typical microtubule is a hollow water-filled tube with an outer diameter of 25 nm and an inner diameter of 15 nM. Alpha-beta heterodimers associate head-to-tail to form protofilaments running lengthwise along the microtubule wall with the beta-tubulin subunit facing the microtubule plus end conferring a structural polarity. Microtubules usually have 13 protofilaments but different protofilament numbers can be found in some organisms and specialized cells. The cofactor is Mg(2+). In terms of processing, some glutamate residues at the C-terminus are polyglycylated, resulting in polyglycine chains on the gamma-carboxyl group. Glycylation is mainly limited to tubulin incorporated into axonemes (cilia and flagella) whereas glutamylation is prevalent in neuronal cells, centrioles, axonemes, and the mitotic spindle. Both modifications can coexist on the same protein on adjacent residues, and lowering polyglycylation levels increases polyglutamylation, and reciprocally. Cilia and flagella glycylation is required for their stability and maintenance. Flagella glycylation controls sperm motility. Some glutamate residues at the C-terminus are polyglutamylated, resulting in polyglutamate chains on the gamma-carboxyl group. Polyglutamylation plays a key role in microtubule severing by spastin (SPAST). SPAST preferentially recognizes and acts on microtubules decorated with short polyglutamate tails: severing activity by SPAST increases as the number of glutamates per tubulin rises from one to eight, but decreases beyond this glutamylation threshold. Glutamylation is also involved in cilia motility. Post-translationally, phosphorylated on Ser-172 by CDK1 during the cell cycle, from metaphase to telophase, but not in interphase. This phosphorylation inhibits tubulin incorporation into microtubules.

Its subcellular location is the cytoplasm. The protein localises to the cytoskeleton. The protein resides in the spindle. In terms of biological role, tubulin is the major constituent of microtubules, a cylinder consisting of laterally associated linear protofilaments composed of alpha- and beta-tubulin heterodimers. Microtubules grow by the addition of GTP-tubulin dimers to the microtubule end, where a stabilizing cap forms. Below the cap, tubulin dimers are in GDP-bound state, owing to GTPase activity of alpha-tubulin. Has a key role in meiotic spindle assembly and oocyte maturation. This Pan troglodytes (Chimpanzee) protein is Tubulin beta-8 chain (TUBB8).